Consider the following 468-residue polypeptide: UDP-N-acetylmuramoyl-L-alanine--L-glutamate ligase (468 aa).

122–128 provides a ligand contact to ATP; the sequence is GTKGKST.

This sequence belongs to the MurCDEF family. MurD2 subfamily.

The protein localises to the cytoplasm. The enzyme catalyses UDP-N-acetyl-alpha-D-muramoyl-L-alanine + L-glutamate + ATP = UDP-N-acetyl-alpha-D-muramoyl-L-alanyl-L-glutamate + ADP + phosphate + H(+). It functions in the pathway cell wall biogenesis; peptidoglycan biosynthesis. Cell wall formation. Catalyzes the addition of L-glutamate to the nucleotide precursor UDP-N-acetylmuramoyl-L-alanine. The chain is UDP-N-acetylmuramoyl-L-alanine--L-glutamate ligase from Xanthomonas euvesicatoria pv. vesicatoria (strain 85-10) (Xanthomonas campestris pv. vesicatoria).